A 427-amino-acid polypeptide reads, in one-letter code: Intermediate conductance calcium-activated potassium channel protein 4 (427 aa).

The chain crosses the membrane as a helical span at residues 29-49 (ALVLAGTGIGLMVLHAEMLWF). A helical membrane pass occupies residues 59 to 79 (FLVKCTISISTFLLLCLIVAF). A helical membrane pass occupies residues 108–128 (IVLELVVCGLHPAPVRGPPCV). A helical membrane pass occupies residues 143-163 (GFLGQGEALLSLAMLLRLYLV). A helical membrane pass occupies residues 207–227 (LLLGLTLGLWLTTAWVLSVAE). An intramembrane region (pore-forming) is located at residues 241-261 (LWLIPITFLTIGYGDVVPGTM). Residues 265–285 (IVCLCTGVMGVCCTALLVAVV) form a helical membrane-spanning segment. A calmodulin-binding region spans residues 286–347 (ARKLEFNKAE…RRHQRKLLAA (62 aa)). H358 is modified (phosphohistidine).

This sequence belongs to the potassium channel KCNN family. KCa3.1/KCNN4 subfamily. Homodimer. Homotetramer. Heterotetramer of potassium channel proteins. Interacts with MTMR6; this interaction leads to selective dephosphorylation of PI(3)P in a lipid microdomain adjacent to KCNN4, resulting in a decrease of intermediate conductance calcium-activated potassium channel activity. Interacts (via the C-tail domain) with CALM1; the calmodulin binding is constitutive, does not require calcium and mediates calcium-dependent gating and four calmodulin molecules bind to one channel tetramer. Post-translationally, phosphorylation at His-358 by NDKB activates the intermediate conductance calcium-activated potassium channel activity, and conversely it's dephosphorylation by PHPT1 inhibits this activity. Widely expressed in non-excitable tissues.

It is found in the cell membrane. Its subcellular location is the cell projection. It localises to the ruffle membrane. The catalysed reaction is K(+)(in) = K(+)(out). The channel is inhibited by clotrimazole and charybdotoxin but is insensitive to apamin. In terms of biological role, intermediate conductance calcium-activated potassium channel that mediates the voltage-independent transmembrane transfer of potassium across the cell membrane through a constitutive interaction with calmodulin which binds the intracellular calcium allowing its opening. The current is characterized by a voltage-independent activation, an intracellular calcium concentration increase-dependent activation and a single-channel conductance of about 25 picosiemens. Also presents an inwardly rectifying current, thus reducing its already small outward conductance of potassium ions, which is particularly the case when the membrane potential displays positive values, above + 20 mV. Controls calcium influx during vascular contractility by being responsible of membrane hyperpolarization induced by vasoactive factors in proliferative vascular smooth muscle cell types. Following calcium influx, the consecutive activation of KCNN4 channel leads to a hyperpolarization of the cell membrane potential and hence an increase of the electrical driving force for further calcium influx promoting sustained calcium entry in response to stimulation with chemotactic peptides. Required for maximal calcium influx and proliferation during the reactivation of naive T-cells. Plays a role in the late stages of EGF-induced macropinocytosis through activation by PI(3)P. The chain is Intermediate conductance calcium-activated potassium channel protein 4 from Homo sapiens (Human).